The chain runs to 80 residues: MSFEVFEKLEAKVQQAIDTITLLQMEIEELKEKNRSLSQEIQNATSGRESLAHENEQLKQEQQVWQERLRALLGKMEDVQ.

Positions 3 to 80 (FEVFEKLEAK…ALLGKMEDVQ (78 aa)) form a coiled coil.

It belongs to the ZapB family. As to quaternary structure, homodimer. The ends of the coiled-coil dimer bind to each other, forming polymers. Interacts with FtsZ.

It is found in the cytoplasm. Its function is as follows. Non-essential, abundant cell division factor that is required for proper Z-ring formation. It is recruited early to the divisome by direct interaction with FtsZ, stimulating Z-ring assembly and thereby promoting cell division earlier in the cell cycle. Its recruitment to the Z-ring requires functional FtsA or ZipA. This is Cell division protein ZapB from Photorhabdus laumondii subsp. laumondii (strain DSM 15139 / CIP 105565 / TT01) (Photorhabdus luminescens subsp. laumondii).